The chain runs to 632 residues: MEFNKLQLSHCISFYISDVSEVFFESINQHPSRDFVNNILQKIKSTLSEEELEKLNTIEEVTKDEKILIMLNHVLKKIVSKTGSSSCDLFQIVKHDRFNEPVYIQSVNAFENNLINNEFAERRYDYLIEINKHSYLRKYVNAIRISFFLDLRAQILSGSFTLDVINKQLEHQNKEELFQAIYLRSLIKHFISNQLYPISLNSFIFGDKNRENKTVENDKLSVLKNNWNQIFFSKYFDFVAKNKEERVVDNNCDELFYATMNTLLIMLIIIEELRVYFNSKEPALILKLLDNKVSLREDPDQNPETDLHELIKFAEKNYLEKEKTSRWHKKRVKSLEELLEEIKQINLETKNESLAYPDEIVELELDNVHNFVSTKQVFRHQLDLQTLHGIVINPERYGIGMWSNHFVDWEEFKDLIEQITDAENGSDLYGFEKDLDESICQVNKKYLTFISSDSSSFLIIKNDQTKVISNYVWAQLYFETRRWIINDIEYDLYEKGFDKSHFASNIALLESLNFNWLDPFYGLTSIKEIMQKIDSKSNLKTSIAEMVAKFKHEQRISKKDNERVLMIFAYVAAAVVGFINFFSMVFTILTVSDLNAGLTPANIVVIAIASLLALFLIVIAVLFRFRWKYIKH.

The next 4 membrane-spanning stretches (helical) occupy residues 255–275 (LFYA…ELRV), 506–526 (IALL…LTSI), 566–586 (MIFA…SMVF), and 603–623 (IVVI…AVLF).

It is found in the cell membrane. This is an uncharacterized protein from Mycoplasma pneumoniae (strain ATCC 29342 / M129 / Subtype 1) (Mycoplasmoides pneumoniae).